Here is a 349-residue protein sequence, read N- to C-terminus: UDP-N-acetylenolpyruvoylglucosamine reductase (349 aa).

The 173-residue stretch at 25–197 folds into the FAD-binding PCMH-type domain; the sequence is GIDARARYAA…VSVTFRLPKR (173 aa). Arg173 is an active-site residue. The active-site Proton donor is Ser249. Residue Glu345 is part of the active site.

It belongs to the MurB family. The cofactor is FAD.

It localises to the cytoplasm. The enzyme catalyses UDP-N-acetyl-alpha-D-muramate + NADP(+) = UDP-N-acetyl-3-O-(1-carboxyvinyl)-alpha-D-glucosamine + NADPH + H(+). The protein operates within cell wall biogenesis; peptidoglycan biosynthesis. Its function is as follows. Cell wall formation. The polypeptide is UDP-N-acetylenolpyruvoylglucosamine reductase (Burkholderia multivorans (strain ATCC 17616 / 249)).